The following is a 342-amino-acid chain: Fructose-1,6-bisphosphatase class 1 (342 aa).

Glu-97, Asp-119, Leu-121, and Asp-122 together coordinate Mg(2+). Residues 122–125 (DGSS), Asn-215, Tyr-247, and Lys-280 contribute to the substrate site. A Mg(2+)-binding site is contributed by Glu-286.

Belongs to the FBPase class 1 family. In terms of assembly, homotetramer. Requires Mg(2+) as cofactor.

It is found in the cytoplasm. It catalyses the reaction beta-D-fructose 1,6-bisphosphate + H2O = beta-D-fructose 6-phosphate + phosphate. Its pathway is carbohydrate biosynthesis; gluconeogenesis. This Leptospira borgpetersenii serovar Hardjo-bovis (strain JB197) protein is Fructose-1,6-bisphosphatase class 1.